The following is a 588-amino-acid chain: Zeta-carotene desaturase, chloroplastic/chromoplastic (588 aa).

The transit peptide at 1-49 directs the protein to the chloroplast and chromoplast; it reads MATCSAYLCCPATSASLKKRVFPDGSAGFLFFGGRRLSNRLVTPKSVIR.

It belongs to the zeta carotene desaturase family. In terms of assembly, monomer and dimer. It depends on decylplastoquinone as a cofactor. The cofactor is 6-decylubiquinone.

Its subcellular location is the plastid. It localises to the chloroplast. The protein resides in the chromoplast. The catalysed reaction is 9,9'-di-cis-zeta-carotene + 2 a quinone = 7,7',9,9'-tetra-cis-lycopene + 2 a quinol. It functions in the pathway carotenoid biosynthesis; lycopene biosynthesis. Its function is as follows. Catalyzes the conversion of zeta-carotene to lycopene via the intermediary of neurosporene. It carries out two consecutive desaturations (introduction of double bonds) at positions C-7 and C-7'. Shows stereoselectivity toward trans C15-C15'zeta-carotene double bond. The zeta-carotene produced by the phytoene desaturase PDS has a C15-C15' double bond in the cis configuration and it requires isomerization before being recognized as substrate by ZDS. No activity with all-trans-zeta-carotene. The main product is 7,9,7',9'-tetra-cis-lycopene (pro-lycopene). This chain is Zeta-carotene desaturase, chloroplastic/chromoplastic (ZDS), found in Capsicum annuum (Capsicum pepper).